A 1771-amino-acid polypeptide reads, in one-letter code: Fatty acid synthase alpha subunit pkiB (1771 aa).

Residues 108 to 130 (SQPTQPQFEPTSPSHLTKRSPSP) show a composition bias toward polar residues. The interval 108-133 (SQPTQPQFEPTSPSHLTKRSPSPSKA) is disordered. Residues 143 to 221 (ELTLQAGHVI…ESFQPEFSGI (79 aa)) form the Carrier domain. S181 carries the post-translational modification O-(pantetheine 4'-phosphoryl)serine. The interval 575-771 (HKAVLVTGAG…CGAVIGWTRG (197 aa)) is beta-ketoacyl reductase. The region spanning 1011–1531 (KELLHEVAVE…QKGAINIMVS (521 aa)) is the Ketosynthase family 3 (KS3) domain. Active-site for beta-ketoacyl synthase activity residues include C1197, H1416, and H1457. Residues D1650, V1651, and E1652 each contribute to the Mg(2+) site. Acetyl-CoA-binding positions include 1650 to 1652 (DVE), Y1676, S1686, 1695 to 1705 (EAAFKSLQTTS), 1719 to 1722 (EVGG), and 1753 to 1755 (ISH). Mg(2+) contacts are provided by S1754 and H1755.

The protein belongs to the thiolase-like superfamily. Fungal fatty acid synthetase subunit alpha family. In terms of assembly, [Alpha(6)beta(6)] hexamers of two multifunctional subunits (alpha and beta).

It carries out the reaction acetyl-CoA + n malonyl-CoA + 2n NADPH + 4n H(+) = a long-chain-acyl-CoA + n CoA + n CO2 + 2n NADP(+).. The catalysed reaction is a fatty acyl-[ACP] + malonyl-[ACP] + H(+) = a 3-oxoacyl-[ACP] + holo-[ACP] + CO2. The enzyme catalyses a (3R)-hydroxyacyl-[ACP] + NADP(+) = a 3-oxoacyl-[ACP] + NADPH + H(+). It participates in secondary metabolite biosynthesis. Its function is as follows. Fatty acid synthase alpha subunit; part of the pki gene cluster that mediates the biosynthesis of 2,4-dihydroxy-3-methyl-6-(2-oxoundecyl)benzaldehyde. The first step in the pathway is the generation of the decanoyl starter unit by the FAS composed of subunits pkiB and pkiC, which is then transferred directly from the FAS to the SAT domain of the non-reducing polyketide synthase pkiA. PkiA condenses the decanoyyl starter unit with 4 malonyl-CoA units and performs one methylation step to yield 2,4-dihydroxy-3-methyl-6-(2-oxoundecyl)benzaldehyde. The protein is Fatty acid synthase alpha subunit pkiB of Emericella nidulans (strain FGSC A4 / ATCC 38163 / CBS 112.46 / NRRL 194 / M139) (Aspergillus nidulans).